A 156-amino-acid polypeptide reads, in one-letter code: Small ribosomal subunit protein uS7c (156 aa).

Belongs to the universal ribosomal protein uS7 family. Part of the 30S ribosomal subunit.

Its subcellular location is the plastid. The protein resides in the chloroplast. Functionally, one of the primary rRNA binding proteins, it binds directly to 16S rRNA where it nucleates assembly of the head domain of the 30S subunit. The protein is Small ribosomal subunit protein uS7c (rps7) of Guillardia theta (Cryptophyte).